Reading from the N-terminus, the 347-residue chain is GMP reductase (347 aa).

Position 108-131 (108-131 (ADFEKTVQILALNPALNFVCIDVA)) interacts with NADP(+). Residues Gly181 and Gly183 each coordinate K(+). Cys186 (thioimidate intermediate) is an active-site residue. 216–239 (IVSDGGCTMPGDVAKAFGGGADFV) provides a ligand contact to NADP(+).

The protein belongs to the IMPDH/GMPR family. GuaC type 1 subfamily. In terms of assembly, homotetramer.

It carries out the reaction IMP + NH4(+) + NADP(+) = GMP + NADPH + 2 H(+). Functionally, catalyzes the irreversible NADPH-dependent deamination of GMP to IMP. It functions in the conversion of nucleobase, nucleoside and nucleotide derivatives of G to A nucleotides, and in maintaining the intracellular balance of A and G nucleotides. The protein is GMP reductase of Salmonella typhi.